A 377-amino-acid chain; its full sequence is Leucine aminopeptidase A (377 aa).

The first 18 residues, 1 to 18, serve as a signal peptide directing secretion; the sequence is MRFLPCIATLAATASALA. Positions 19–79 are excised as a propeptide; sequence IGDHVRSDDQ…SNKKQKLAVT (61 aa). N-linked (GlcNAc...) asparagine glycosylation is present at Asn87. Residues His176, Asp195, Glu234, and Asp261 each contribute to the Zn(2+) site. Residue Asn288 is glycosylated (N-linked (GlcNAc...) asparagine). Cysteines 310 and 314 form a disulfide. His343 contributes to the Zn(2+) binding site.

Belongs to the peptidase M28 family. M28E subfamily. Monomer. Requires Zn(2+) as cofactor.

Its subcellular location is the secreted. Its activity is regulated as follows. Calcium, magnesium and manganese cations reduce peptidase activity to 20.3-51.3 percent. The metal ion chelating reagent EDTA almost completely inhibits activity. The protease inhibitor bacitracin and the aminopeptidase B inhibitor bestatin, as well as DTT and beta-mercaptoethanol act also as lap A inhibitorsD. Its function is as follows. Extracellular aminopeptidase that allows assimilation of proteinaceous substrates. This Aspergillus oryzae (strain ATCC 42149 / RIB 40) (Yellow koji mold) protein is Leucine aminopeptidase A (lapA).